We begin with the raw amino-acid sequence, 336 residues long: Tyrosine phosphatase-like protein H1 (336 aa).

Positions 27–295 (IKKEHHKLMK…EICYRVLCEA (269 aa)) constitute a Tyrosine-protein phosphatase domain.

It belongs to the protein-tyrosine phosphatase family.

In Microplitis demolitor (Parasitoid wasp), this protein is Tyrosine phosphatase-like protein H1 (H1).